The primary structure comprises 193 residues: Regulator of free ubiquitin chains 1 (193 aa).

Belongs to the RFU1 family.

The protein localises to the endosome. Functionally, inhibitor of the DOA4 deubiquitinase involved in the regulation of protein degradation by the proteasome and maintenance of a normal level of free ubiquitin. The polypeptide is Regulator of free ubiquitin chains 1 (RFU1) (Eremothecium gossypii (strain ATCC 10895 / CBS 109.51 / FGSC 9923 / NRRL Y-1056) (Yeast)).